A 188-amino-acid polypeptide reads, in one-letter code: Ribonuclease HII (188 aa).

In terms of domain architecture, RNase H type-2 spans 6–188 (KPLCGIDEAG…VKGLDEPTLF (183 aa)). 3 residues coordinate a divalent metal cation: Asp12, Glu13, and Asp99.

Belongs to the RNase HII family. The cofactor is Mn(2+). It depends on Mg(2+) as a cofactor.

The protein localises to the cytoplasm. It catalyses the reaction Endonucleolytic cleavage to 5'-phosphomonoester.. Its function is as follows. Endonuclease that specifically degrades the RNA of RNA-DNA hybrids. The protein is Ribonuclease HII of Sulfurovum sp. (strain NBC37-1).